The chain runs to 141 residues: Hemoglobin subunit alpha-D (141 aa).

The 141-residue stretch at 1 to 141 (MLTAEDKKLI…VAAVLAEKYR (141 aa)) folds into the Globin domain. Heme b contacts are provided by histidine 58 and histidine 87.

The protein belongs to the globin family. In terms of assembly, heterotetramer of two alpha-D chains and two beta chains. In terms of tissue distribution, red blood cells.

In terms of biological role, involved in oxygen transport from the lung to the various peripheral tissues. This chain is Hemoglobin subunit alpha-D (HBAD), found in Apus apus (Common swift).